A 285-amino-acid polypeptide reads, in one-letter code: Dermonecrotic toxin LiSicTox-alphaIA2aii (285 aa).

A propeptide spanning residues 1–5 (DVEER) is cleaved from the precursor. The active site involves His17. Positions 37 and 39 each coordinate Mg(2+). His53 serves as the catalytic Nucleophile. Cystine bridges form between Cys57/Cys63 and Cys59/Cys202. Asp97 lines the Mg(2+) pocket. N-linked (GlcNAc...) asparagine glycosylation is present at Asn262.

Belongs to the arthropod phospholipase D family. Class II subfamily. Class IIa sub-subfamily. The cofactor is Mg(2+). Expressed by the venom gland.

It localises to the secreted. It catalyses the reaction an N-(acyl)-sphingosylphosphocholine = an N-(acyl)-sphingosyl-1,3-cyclic phosphate + choline. It carries out the reaction an N-(acyl)-sphingosylphosphoethanolamine = an N-(acyl)-sphingosyl-1,3-cyclic phosphate + ethanolamine. The enzyme catalyses a 1-acyl-sn-glycero-3-phosphocholine = a 1-acyl-sn-glycero-2,3-cyclic phosphate + choline. The catalysed reaction is a 1-acyl-sn-glycero-3-phosphoethanolamine = a 1-acyl-sn-glycero-2,3-cyclic phosphate + ethanolamine. Its function is as follows. Dermonecrotic toxins cleave the phosphodiester linkage between the phosphate and headgroup of certain phospholipids (sphingolipid and lysolipid substrates), forming an alcohol (often choline) and a cyclic phosphate. This toxin acts on sphingomyelin (SM) with high activity. It may also act on ceramide phosphoethanolamine (CPE), lysophosphatidylcholine (LPC) and lysophosphatidylethanolamine (LPE), but not on lysophosphatidylserine (LPS), and lysophosphatidylglycerol (LPG). It acts by transphosphatidylation, releasing exclusively cyclic phosphate products as second products. Shows high hemolytic activity. Induces dermonecrosis, vascular permeability, edema, inflammatory response, and platelet aggregation. Also shows cytotoxicity against renal epithelial cells. In addition, also induces hemolysis in a complement-dependent manner and probably also in a complement-independent manner. The hemolysis provoked in a complement-independent manner may be composed of several steps. The toxin may bind to erythrocyte membranes, may hydrolyze membrane phospholipids (SM and LPC) thus generating metabolism products that may cause hemolysis, probably by provoking an increase of calcium inside cells. The calcium influx may be due to the opening of L-type calcium channels, since L-type calcium channel blockers inhibit calcium influx. In vivo, is lethal to mice when intraperitoneally injected. The protein is Dermonecrotic toxin LiSicTox-alphaIA2aii of Loxosceles intermedia (Brown spider).